The primary structure comprises 129 residues: Small ribosomal subunit protein uS11 (129 aa).

The protein belongs to the universal ribosomal protein uS11 family. As to quaternary structure, part of the 30S ribosomal subunit. Interacts with proteins S7 and S18. Binds to IF-3.

Its function is as follows. Located on the platform of the 30S subunit, it bridges several disparate RNA helices of the 16S rRNA. Forms part of the Shine-Dalgarno cleft in the 70S ribosome. The polypeptide is Small ribosomal subunit protein uS11 (Bartonella henselae (strain ATCC 49882 / DSM 28221 / CCUG 30454 / Houston 1) (Rochalimaea henselae)).